The following is a 469-amino-acid chain: MAKTLYQKLFDAHVVYEAEGETPILYINRHLIHEVTSPQAFDGLRVAGRQVRQVSKTFGTMDHSISTQVRDVNKLEGQAKIQVLELDKNCKATGISLFDMNTKEQGIVHVMGPEQGLTLPGMTIVCGDSHTATHGAFGALAFGIGTSEVEHVLATQTLKQARAKSMKVEVRGKVNPGITAKDIVLAIIGKTTMAGGTGHVVEFCGEAIRDLSMEGRMTVCNMAIEFGAKAGLVAPDETTFEYLKGRPHAPKGKDWDDAVAYWKTLKSDEDAQFDTVVVLEAKDIAPQVTWGTNPGQVIGIDQLVPNPAEMTDPVTKASAEKALAYIGLEPNTDLKNVPVDQVFIGSCTNSRIEDLRAAAAVMKGRKKADNVKRVLVVPGSGLVKEQAEKEGLDKIFLAAGAEWRNPGCSMCLGMNDDRLGEWERCASTSNRNFEGRQGRNGRTHLVSPAMAAAAAVFGKFVDIRNVSLN.

Cys347, Cys408, and Cys411 together coordinate [4Fe-4S] cluster.

The protein belongs to the aconitase/IPM isomerase family. LeuC type 1 subfamily. As to quaternary structure, heterodimer of LeuC and LeuD. It depends on [4Fe-4S] cluster as a cofactor.

The catalysed reaction is (2R,3S)-3-isopropylmalate = (2S)-2-isopropylmalate. The protein operates within amino-acid biosynthesis; L-leucine biosynthesis; L-leucine from 3-methyl-2-oxobutanoate: step 2/4. In terms of biological role, catalyzes the isomerization between 2-isopropylmalate and 3-isopropylmalate, via the formation of 2-isopropylmaleate. This Mannheimia succiniciproducens (strain KCTC 0769BP / MBEL55E) protein is 3-isopropylmalate dehydratase large subunit 2.